We begin with the raw amino-acid sequence, 125 residues long: Large ribosomal subunit protein eL22 (125 aa).

Belongs to the eukaryotic ribosomal protein eL22 family. As to quaternary structure, component of the large ribosomal subunit.

It localises to the cytoplasm. Its function is as follows. Component of the large ribosomal subunit. The ribosome is a large ribonucleoprotein complex responsible for the synthesis of proteins in the cell. The chain is Large ribosomal subunit protein eL22 (rpl22) from Gadus morhua (Atlantic cod).